The following is a 531-amino-acid chain: HERV-H LTR-associating protein 1 (531 aa).

The first 29 residues, 1 to 29, serve as a signal peptide directing secretion; it reads MLGFLSRGPSMKLCMGLACVLSLWNTVSG. N-linked (GlcNAc...) asparagine glycosylation is found at asparagine 79, asparagine 143, and asparagine 161. 2 disordered regions span residues 231–289 and 340–362; these read GTAR…RPPE and EKKPGGSLWETRSSPPTTAGTEE. Polar residues-rich tracts occupy residues 232–269 and 349–362; these read TARTSKPTTKSQKTLPSTSPGHWTQSTPWASALRSSPW and ETRSSPPTTAGTEE.

It localises to the secreted. This is HERV-H LTR-associating protein 1 (HHLA1) from Homo sapiens (Human).